A 335-amino-acid chain; its full sequence is Tetraacyldisaccharide 4'-kinase (335 aa).

58-65 serves as a coordination point for ATP; sequence TMGGAGKT.

This sequence belongs to the LpxK family.

It carries out the reaction a lipid A disaccharide + ATP = a lipid IVA + ADP + H(+). It participates in glycolipid biosynthesis; lipid IV(A) biosynthesis; lipid IV(A) from (3R)-3-hydroxytetradecanoyl-[acyl-carrier-protein] and UDP-N-acetyl-alpha-D-glucosamine: step 6/6. Its function is as follows. Transfers the gamma-phosphate of ATP to the 4'-position of a tetraacyldisaccharide 1-phosphate intermediate (termed DS-1-P) to form tetraacyldisaccharide 1,4'-bis-phosphate (lipid IVA). This chain is Tetraacyldisaccharide 4'-kinase, found in Caulobacter vibrioides (strain ATCC 19089 / CIP 103742 / CB 15) (Caulobacter crescentus).